Reading from the N-terminus, the 513-residue chain is Bifunctional purine biosynthesis protein PurH (513 aa).

One can recognise an MGS-like domain in the interval 1–144; the sequence is MKRALISVSD…KNYQDVTVVT (144 aa).

This sequence belongs to the PurH family.

The enzyme catalyses (6R)-10-formyltetrahydrofolate + 5-amino-1-(5-phospho-beta-D-ribosyl)imidazole-4-carboxamide = 5-formamido-1-(5-phospho-D-ribosyl)imidazole-4-carboxamide + (6S)-5,6,7,8-tetrahydrofolate. It catalyses the reaction IMP + H2O = 5-formamido-1-(5-phospho-D-ribosyl)imidazole-4-carboxamide. It participates in purine metabolism; IMP biosynthesis via de novo pathway; 5-formamido-1-(5-phospho-D-ribosyl)imidazole-4-carboxamide from 5-amino-1-(5-phospho-D-ribosyl)imidazole-4-carboxamide (10-formyl THF route): step 1/1. The protein operates within purine metabolism; IMP biosynthesis via de novo pathway; IMP from 5-formamido-1-(5-phospho-D-ribosyl)imidazole-4-carboxamide: step 1/1. This chain is Bifunctional purine biosynthesis protein PurH, found in Lactobacillus acidophilus (strain ATCC 700396 / NCK56 / N2 / NCFM).